A 161-amino-acid chain; its full sequence is ATP synthase subunit b 1 (161 aa).

The helical transmembrane segment at 3–23 (LDATFYALVGLILFFVLIAYL) threads the bilayer.

This sequence belongs to the ATPase B chain family. In terms of assembly, F-type ATPases have 2 components, F(1) - the catalytic core - and F(0) - the membrane proton channel. F(1) has five subunits: alpha(3), beta(3), gamma(1), delta(1), epsilon(1). F(0) has three main subunits: a(1), b(2) and c(10-14). The alpha and beta chains form an alternating ring which encloses part of the gamma chain. F(1) is attached to F(0) by a central stalk formed by the gamma and epsilon chains, while a peripheral stalk is formed by the delta and b chains.

The protein resides in the cell inner membrane. In terms of biological role, f(1)F(0) ATP synthase produces ATP from ADP in the presence of a proton or sodium gradient. F-type ATPases consist of two structural domains, F(1) containing the extramembraneous catalytic core and F(0) containing the membrane proton channel, linked together by a central stalk and a peripheral stalk. During catalysis, ATP synthesis in the catalytic domain of F(1) is coupled via a rotary mechanism of the central stalk subunits to proton translocation. Its function is as follows. Component of the F(0) channel, it forms part of the peripheral stalk, linking F(1) to F(0). The protein is ATP synthase subunit b 1 of Rhizobium meliloti (strain 1021) (Ensifer meliloti).